The chain runs to 173 residues: RNA pyrophosphohydrolase (173 aa).

The region spanning 11–164 (PYRKCVGILV…KKHVYTQVVK (154 aa)) is the Nudix hydrolase domain. Positions 52–73 (GGINQGEKPIDAARRELYEETG) match the Nudix box motif.

Belongs to the Nudix hydrolase family. RppH subfamily. A divalent metal cation serves as cofactor.

Accelerates the degradation of transcripts by removing pyrophosphate from the 5'-end of triphosphorylated RNA, leading to a more labile monophosphorylated state that can stimulate subsequent ribonuclease cleavage. In Bartonella clarridgeiae, this protein is RNA pyrophosphohydrolase.